The primary structure comprises 90 residues: Conotoxin Mr22.1 (90 aa).

A signal peptide spans 1–18 (MMTRVFFAMFFLMALTEG). Positions 19-49 (WPRLYDSDCVRGRNMHITCFKDQTCGLTVKR) are excised as a propeptide. W75 carries the 6'-bromotryptophan modification.

It belongs to the E superfamily. Contains 4 disulfide bonds. As to expression, expressed by the venom duct.

It localises to the secreted. In Conus marmoreus (Marble cone), this protein is Conotoxin Mr22.1.